The chain runs to 296 residues: MPSLKDLRNRITSVKATQKITKAMQMVAAAKLRRAQNAAENGRPYAERMAQVLGNLAGNLIGGVGAPRLLTGTGQDRVHLLVVCTGDRGLAGAFNSSIARLARDHANRLMADGKTVKIITIGKKGLDVLRRQFRDQIIASRDIRGNKPVDYPFAAEIADDILARFEAGEFDVATLFYSEFRSVISQIPTAQKLIPAELPTAEGAAATGAGSDAAMEFEPNEETILETLLPKNLTVQIFRALLENAASEQGARMSAMDSATRNAGEMIKKQTLIYNRTRQAMITKELIEIISGAEAL.

This sequence belongs to the ATPase gamma chain family. In terms of assembly, F-type ATPases have 2 components, CF(1) - the catalytic core - and CF(0) - the membrane proton channel. CF(1) has five subunits: alpha(3), beta(3), gamma(1), delta(1), epsilon(1). CF(0) has three main subunits: a, b and c.

Its subcellular location is the cell inner membrane. Its function is as follows. Produces ATP from ADP in the presence of a proton gradient across the membrane. The gamma chain is believed to be important in regulating ATPase activity and the flow of protons through the CF(0) complex. The sequence is that of ATP synthase gamma chain from Methylorubrum extorquens (strain PA1) (Methylobacterium extorquens).